The primary structure comprises 354 residues: Allantoicase (354 aa).

This sequence belongs to the allantoicase family.

It catalyses the reaction allantoate + H2O = (S)-ureidoglycolate + urea. The protein operates within nitrogen metabolism; (S)-allantoin degradation; (S)-ureidoglycolate from allantoate (aminidohydrolase route): step 1/1. Functionally, utilization of purines as secondary nitrogen sources, when primary sources are limiting. The polypeptide is Allantoicase (alc-1) (Neurospora crassa (strain ATCC 24698 / 74-OR23-1A / CBS 708.71 / DSM 1257 / FGSC 987)).